The primary structure comprises 118 residues: Holo-[acyl-carrier-protein] synthase (118 aa).

Mg(2+)-binding residues include Asp8 and Glu58.

It belongs to the P-Pant transferase superfamily. AcpS family. Mg(2+) is required as a cofactor.

Its subcellular location is the cytoplasm. It carries out the reaction apo-[ACP] + CoA = holo-[ACP] + adenosine 3',5'-bisphosphate + H(+). Transfers the 4'-phosphopantetheine moiety from coenzyme A to a Ser of acyl-carrier-protein. In Streptococcus equi subsp. zooepidemicus (strain MGCS10565), this protein is Holo-[acyl-carrier-protein] synthase.